Consider the following 602-residue polypeptide: Na(+)/dicarboxylate cotransporter 3 (602 aa).

Residues 1-16 (MAALAAAAKKVWSARR) are Cytoplasmic-facing. The helical transmembrane segment at 17-37 (LLVLLFTPLALLPVVFALPPK) threads the bilayer. Over 38-55 (EGRCLFVILLMAVYWCTE) the chain is Extracellular. The helical transmembrane segment at 56–76 (ALPLSVTALLPIVLFPFMGIL) threads the bilayer. The Cytoplasmic portion of the chain corresponds to 77-82 (PSNKVC). Residues 83-103 (PQYFLDTNFLFLSGLIMASAI) traverse the membrane as a helical segment. At 104–137 (EEWNLHRRIALKILMLVGVQPARLILGMMVTTSF) the chain is on the extracellular side. Residues 138 to 158 (LSMWLSNTASTAMMLPIANAI) form a helical membrane-spanning segment. The Cytoplasmic segment spans residues 159–229 (LKSLFGQKEV…SRKEDEYRRN (71 aa)). The chain crosses the membrane as a helical span at residues 230 to 250 (IWKGFLISIPYSASIGGTATL). Residues 251 to 278 (TGTAPNLILLGQLKSFFPQCDVVNFGSW) are Extracellular-facing. A helical membrane pass occupies residues 279–299 (FIFAFPLMLLFLLAGWLWISF). At 300–336 (LYGGLSFRGWRKNKSEIRTNAEDRARAVIREEYQNLG) the chain is on the cytoplasmic side. The helical transmembrane segment at 337–357 (PIKFAEQAVFILFCMFAILLF) threads the bilayer. Residues 358-372 (TRDPKFIPGWASLFN) lie on the Extracellular side of the membrane. A helical transmembrane segment spans residues 373-393 (PGFLSDAVTGVAIVTILFFFP). Topologically, residues 394 to 422 (SQRPSLKWWFDFKAPNTETEPLLTWKKAQ) are cytoplasmic. The segment at residues 423–443 (ETVPWNIILLLGGGFAMAKGC) is an intramembrane region (helical). Residues 444–461 (EESGLSVWIGGQLHPLEN) lie on the Cytoplasmic side of the membrane. The chain crosses the membrane as a helical span at residues 462–482 (VPPALAVLLITVVIAFFTEFA). Topologically, residues 483–505 (SNTATIIIFLPVLAELAIRLRVH) are extracellular. A helical membrane pass occupies residues 506 to 526 (PLYLMIPGTVGCSFAFMLPVS). Residues 527-546 (TPPNSIAFASGHLLVKDMVR) lie on the Cytoplasmic side of the membrane. A helical membrane pass occupies residues 547–567 (TGLLMNLMGVLLLSLAMNTWA). Residues 568–602 (QTIFQLGTFPDWADMYSVNVTALPPTLANDTFRTL) are Extracellular-facing. Residues Asn586 and Asn596 are each glycosylated (N-linked (GlcNAc...) asparagine).

The protein belongs to the SLC13A/DASS transporter (TC 2.A.47) family. NADC subfamily. In terms of tissue distribution, expression is highest in kidney. Detected in placenta, brain, liver and pancreas.

It is found in the cell membrane. The catalysed reaction is succinate(out) + 3 Na(+)(out) = succinate(in) + 3 Na(+)(in). It catalyses the reaction 2-oxoglutarate(out) + 3 Na(+)(out) = 2-oxoglutarate(in) + 3 Na(+)(in). It carries out the reaction N-acetyl-L-aspartate(out) + 3 Na(+)(out) = N-acetyl-L-aspartate(in) + 3 Na(+)(in). The enzyme catalyses glutarate(out) + 3 Na(+)(out) = glutarate(in) + 3 Na(+)(in). The catalysed reaction is fumarate(out) + 3 Na(+)(out) = fumarate(in) + 3 Na(+)(in). It catalyses the reaction malate(out) + 3 Na(+)(out) = malate(in) + 3 Na(+)(in). It carries out the reaction 2,2-dimethylsuccinate(out) + 3 Na(+)(out) = 2,2-dimethylsuccinate(in) + 3 Na(+)(in). The enzyme catalyses 2,3-dimethylsuccinate(out) + 3 Na(+)(out) = 2,3-dimethylsuccinate(in) + 3 Na(+)(in). The catalysed reaction is itaconate(out) + 3 Na(+)(out) = itaconate(in) + 3 Na(+)(in). Its activity is regulated as follows. Li(+) decreases succinate transport in the presence of Na(+). Functionally, high-affinity sodium-dicarboxylate cotransporter that accepts a range of substrates with 4-6 carbon atoms, such as the citric acid cycle intermediates succinate and alpha-ketoglutarate (2-oxoglutarate), as well as other compounds including N-acetyl-L-aspartate. Transports the dicarboxylate into the cell with a probable stoichiometry of 3 Na(+) for 1 divalent dicarboxylate, rendering the process electrogenic. Can transport citrate in a Na(+)-dependent manner, recognizing the divalent form of citrate rather than the trivalent form which is normally found in blood. Imports itaconate in hepatocytes leading to activation of TFEB-dependent lysosomal biogenesis involved in antibacterial innate immune response. The polypeptide is Na(+)/dicarboxylate cotransporter 3 (SLC13A3) (Homo sapiens (Human)).